We begin with the raw amino-acid sequence, 860 residues long: MENQKENLFSEPHKRGLVKSPLQESSKANVVLAEIQPDLGPLTTPTKPKEVSQGEPWTPTANLKMLISAVSPEIRSRDQKRGLSDNRSGLPEARDCLHEPQAKTNEKSQPSRKEKSLGLLCHKFLARYPKYPNPAVNNDICLDEVAEELDVERRRIYDIVNVLESLHMVSRLAKNRYTWHGRHNLTKTLGTLKSVGEENKYAEQIMMIKRKEHEQEFDFIKSCGLEDHHVIKSTAGQNGHSDMCFVELPGVEFRAASANSRKDKSLRVMSQKFVMLFLVSTPQIVSLEIAAKILIGEDHVEDLDKSKFKTKIRRLYDIANVLSSLDLIKKVHVTEERGRKPAFKWTGPEISPNNSGSSPVMPLTASLEAEQSAKENCAKNLFSTRGKPSFTRHPSLIKLVKSIENDRRKISSAPSSPVKSSKAESSQNSPPVPNKMAQLAAICKMQLEEQSSEPRKRVKVNLTRSGHYKPLAPLDPAVNTELELLAPSLIQPLGMVPLIPSPLSSAVPVILPQAPSGPSYAIYLQPAQAQMLTPPHGLSPTVCPTQSSNATGSKDPTDAPTEKTATDATKPGSLQPAPERQGAKNRSKETTGDRGTKRTGALEDGGPGPIKKPKEDLKALENVPTPTTLFPSGYLIPLTQCPSLGPDPMLSNTENSGTLSPNHRIYGSPIAGVIPVASSELTAVNFPPFHVTPLKLMVSPTSMAAVPVGNSPALSSSHPAPTQNPSSAIVNFTLQHLGLISPGVQMSASPGPGAGTVPLSPRVEADNLSSRQGRATIHDSPVLGQSQLNGQPVAGTGAQQPVPVTPKGSQLVAESFFRTPGGPTKPTSSSFMDFDGANKTSFGTLFVPQRKLEVSTEDVH.

A disordered region spans residues 1–114 (MENQKENLFS…NEKSQPSRKE (114 aa)). S71 is subject to Phosphoserine. Basic and acidic residues-rich tracts occupy residues 74–84 (IRSRDQKRGLS) and 92–114 (EARDCLHEPQAKTNEKSQPSRKE). DNA-binding regions lie at residues 112-181 (RKEK…TWHG) and 261-347 (RKDK…KWTG). Disordered stretches follow at residues 407-433 (RRKISSAPSSPVKSSKAESSQNSPPVP) and 533-616 (TPPH…PKED). Positions 411–426 (SSAPSSPVKSSKAESS) are enriched in low complexity. S412 and S416 each carry phosphoserine. Residues 542 to 554 (VCPTQSSNATGSK) show a composition bias toward polar residues. Composition is skewed to basic and acidic residues over residues 555 to 565 (DPTDAPTEKTA) and 586 to 596 (RSKETTGDRGT).

Belongs to the E2F/DP family. In terms of assembly, homodimer and heterodimer: mainly forms homodimers and, to a lesser extent, heterodimers with E2F8. Dimerization is important for DNA-binding. Interacts with HIF1A.

Its subcellular location is the nucleus. Functionally, atypical E2F transcription factor that participates in various processes such as angiogenesis and polyploidization of specialized cells. Mainly acts as a transcription repressor that binds DNA independently of DP proteins and specifically recognizes the E2 recognition site 5'-TTTC[CG]CGC-3'. Directly represses transcription of classical E2F transcription factors such as E2F1: component of a feedback loop in S phase by repressing the expression of E2F1, thereby preventing p53/TP53-dependent apoptosis. Plays a key role in polyploidization of cells in placenta and liver by regulating the endocycle, probably by repressing genes promoting cytokinesis and antagonizing action of classical E2F proteins (E2F1, E2F2 and/or E2F3). Required for placental development by promoting polyploidization of trophoblast giant cells. Acts as a promoter of sprouting angiogenesis, possibly by acting as a transcription activator: associates with HIF1A, recognizes and binds the VEGFA promoter, which is different from canonical E2 recognition site, and activates expression of the VEGFA gene. The chain is Transcription factor E2F8 (E2f8) from Rattus norvegicus (Rat).